The chain runs to 353 residues: DNA polymerase IV (353 aa).

The UmuC domain maps to 6–187 (IIHVDCDCFY…LPVSKLHGVG (182 aa)). The Mg(2+) site is built by Asp10 and Asp105. Glu106 is a catalytic residue.

It belongs to the DNA polymerase type-Y family. In terms of assembly, monomer. It depends on Mg(2+) as a cofactor.

It localises to the cytoplasm. It carries out the reaction DNA(n) + a 2'-deoxyribonucleoside 5'-triphosphate = DNA(n+1) + diphosphate. Its function is as follows. Poorly processive, error-prone DNA polymerase involved in untargeted mutagenesis. Copies undamaged DNA at stalled replication forks, which arise in vivo from mismatched or misaligned primer ends. These misaligned primers can be extended by PolIV. Exhibits no 3'-5' exonuclease (proofreading) activity. May be involved in translesional synthesis, in conjunction with the beta clamp from PolIII. In Pseudomonas fluorescens (strain Pf0-1), this protein is DNA polymerase IV.